The chain runs to 693 residues: MLERCPWKLISSPRNIPARSFLNSRGTYLVLRKSNILPLQHILRFSNFASKQCFPLRNGNNSASKALWNNKSKEKEPLNTSVKLASDVPDDKNVTGQMIVKDMLQYIWPKGKTNLKVRVVSALALLVAAKILNVQVPFYFKSIIDTMNTTLVQEVGALWSTVGAVVLGYGFARIFSTVFQELRNSVFAIVSQSAIRSVSSNVYQHLLNLDMNFHLSKQTGSITRAMDRGTKGISFILSSMVLHIIPITLEIAMVSGILTYKYGPSFSAIAATTVALYALFTVRTTSWRTVFRRQANAADSKASAAAIESLINYEAVKTFNNESYEMSRYEKHLSAYEKANVKVASSLAFLNSGQAIIFSTALTLMMYMGCRGIVTSNLTVGDLVMINQLVFQLSIPLNFLGSVYREMRQAFTDMEQLFSLKRINIQVKEAPDARDLVLKGGSIQFDNVHFSYNPNRPILNGCSFNIPAGAKVAFVGASGCGKSTILRLLFRFYDTDSGKILIDNQRLDQITLNSLRKAIGVVPQDTPLFNDTILYNIGYGNPKASNDEIVEAAKKAKIHDIIESFPEGYQTKVGERGLMISGGEKQRLAVSRLLLKNPEILFFDEATSALDTNTERALLRNINDLIKGSHKTSVFIAHRLRTIKDCDIIFVLEKGRVVEQGSHEQLMAKNSVYTSMWHSQESPFGESNKSGDA.

Residues 1-28 constitute a mitochondrion transit peptide; the sequence is MLERCPWKLISSPRNIPARSFLNSRGTY. Residues 29-118 lie on the Mitochondrial matrix side of the membrane; sequence LVLRKSNILP…PKGKTNLKVR (90 aa). A helical membrane pass occupies residues 119–140; the sequence is VVSALALLVAAKILNVQVPFYF. The ABC transmembrane type-1 domain maps to 119–409; that stretch reads VVSALALLVA…LGSVYREMRQ (291 aa). The Mitochondrial intermembrane segment spans residues 141–163; it reads KSIIDTMNTTLVQEVGALWSTVG. The chain crosses the membrane as a helical span at residues 164–187; the sequence is AVVLGYGFARIFSTVFQELRNSVF. Residues 188 to 236 lie on the Mitochondrial matrix side of the membrane; sequence AIVSQSAIRSVSSNVYQHLLNLDMNFHLSKQTGSITRAMDRGTKGISFI. A helical transmembrane segment spans residues 237–260; the sequence is LSSMVLHIIPITLEIAMVSGILTY. Position 261 (lysine 261) is a topological domain, mitochondrial intermembrane. Residues 262–282 form a helical membrane-spanning segment; that stretch reads YGPSFSAIAATTVALYALFTV. Residues 283-348 are Mitochondrial matrix-facing; the sequence is RTTSWRTVFR…ANVKVASSLA (66 aa). Glutathione is bound by residues 288-292 and 351-354; these read RTVFR and NSGQ. Residues 349-367 traverse the membrane as a helical segment; the sequence is FLNSGQAIIFSTALTLMMY. The Mitochondrial intermembrane segment spans residues 368 to 382; the sequence is MGCRGIVTSNLTVGD. Residues 383-404 form a helical membrane-spanning segment; the sequence is LVMINQLVFQLSIPLNFLGSVY. Position 401 (glycine 401) interacts with glutathione. At 405-693 the chain is on the mitochondrial matrix side; that stretch reads REMRQAFTDM…FGESNKSGDA (289 aa). The 237-residue stretch at 443 to 679 folds into the ABC transporter domain; that stretch reads IQFDNVHFSY…NSVYTSMWHS (237 aa). Residues tyrosine 452 and 476 to 487 each bind ATP; that span reads GASGCGKSTILR.

This sequence belongs to the ABC transporter superfamily. ABCB family. Heavy Metal importer (TC 3.A.1.210) subfamily. Homodimer.

The protein localises to the mitochondrion inner membrane. Its function is as follows. Performs an essential function in the generation of cytoplasmic iron-sulfur proteins by mediating the ATP-dependent export of Fe/S cluster precursors synthesized by nfs1 and other mitochondrial proteins. Hydrolyzes ATP. Binds glutathione and may function by transporting a glutathione-conjugated iron-sulfur compound. In Schizosaccharomyces pombe (strain 972 / ATCC 24843) (Fission yeast), this protein is Iron-sulfur clusters transporter atm1, mitochondrial.